The following is a 512-amino-acid chain: Tyrosine decarboxylase (512 aa).

Proline 100, histidine 205, and histidine 320 together coordinate L-tyrosine. Lysine 321 carries the N6-(pyridoxal phosphate)lysine modification. Residue tyrosine 350 participates in L-tyrosine binding.

Belongs to the group II decarboxylase family. As to quaternary structure, homodimer. The cofactor is pyridoxal 5'-phosphate. As to expression, mainly expressed in roots, stems and capsule walls.

It catalyses the reaction L-tyrosine + H(+) = tyramine + CO2. In terms of biological role, tyrosine decarboxylase that converts tyrosine into tyramine, a precursor of isoquinoline alkaloids and various amides. The protein is Tyrosine decarboxylase of Papaver somniferum (Opium poppy).